The primary structure comprises 258 residues: Small ribosomal subunit protein mS40 (258 aa).

Residues 1–35 (MAASILNVLLRRLPGVSPFRGAYGVQVLLQTLCTK) constitute a mitochondrion transit peptide. Serine 49 carries the post-translational modification Phosphoserine. The segment at 223–258 (RLREESGPPPELMPEVPLTAPAEASSTEPGAPQSAL) is disordered.

This sequence belongs to the bacterial ribosomal protein bS18 family. Mitochondrion-specific ribosomal protein mS40 subfamily. Component of the mitochondrial ribosome small subunit (28S) which comprises a 12S rRNA and about 30 distinct proteins.

The protein resides in the mitochondrion. This is Small ribosomal subunit protein mS40 (MRPS18B) from Sus scrofa (Pig).